The chain runs to 227 residues: MSPMKVAVVGASGKVGRLLINQLKANDSFSTPLAIVRTQDQVNYFKNEVGVDASLTDIENASVSEITDAIKAYDAVVFSAGAGGKGMERIFTVDLDGCIKVVEACEKAGIKRFVVVSALKAEDRDFWYNIKGLREYYIAKRSADREVRNSNLDYTILQPGSLELNKGTGLLQPLDKLEEKASVNYSINREDVASFIVESLLHPNATVKKTISLVNGNEPMEKFIQSL.

It belongs to the UPF0659 family.

It is found in the cytoplasm. This is UPF0659 protein YMR090W from Saccharomyces cerevisiae (strain ATCC 204508 / S288c) (Baker's yeast).